The primary structure comprises 170 residues: ATP synthase subunit b (170 aa).

Residues 4–24 form a helical membrane-spanning segment; it reads ILLLGLALAPVALFASQGAVE.

Belongs to the ATPase B chain family. F-type ATPases have 2 components, F(1) - the catalytic core - and F(0) - the membrane proton channel. F(1) has five subunits: alpha(3), beta(3), gamma(1), delta(1), epsilon(1). F(0) has three main subunits: a(1), b(2) and c(10-14). The alpha and beta chains form an alternating ring which encloses part of the gamma chain. F(1) is attached to F(0) by a central stalk formed by the gamma and epsilon chains, while a peripheral stalk is formed by the delta and b chains.

The protein localises to the cell inner membrane. Functionally, f(1)F(0) ATP synthase produces ATP from ADP in the presence of a proton or sodium gradient. F-type ATPases consist of two structural domains, F(1) containing the extramembraneous catalytic core and F(0) containing the membrane proton channel, linked together by a central stalk and a peripheral stalk. During catalysis, ATP synthesis in the catalytic domain of F(1) is coupled via a rotary mechanism of the central stalk subunits to proton translocation. Component of the F(0) channel, it forms part of the peripheral stalk, linking F(1) to F(0). In Aliarcobacter butzleri (strain RM4018) (Arcobacter butzleri), this protein is ATP synthase subunit b.